The chain runs to 352 residues: Ion-translocating oxidoreductase complex subunit D (352 aa).

The next 5 membrane-spanning stretches (helical) occupy residues 20–40 (IMLLVLLAAVPGIAAQLWFFG), 42–62 (GTLVQILLASVSALLAEALVL), 78–109 (ALLTGLLLAVSIPPLAPWWMVVLGTVFAVIIA), 123–143 (PAMIGYVVLLISFPVQMTSWL), and 148–168 (IAVNIPGFIDAIQVIFSGHTA). An FMN phosphoryl threonine modification is found at Thr187. 5 helical membrane-spanning segments follow: residues 214–234 (ILAGAGWQWVNLAWLAGGVWL), 242–262 (WHIPLSFLVTLALCAMLGWLF), 267–287 (LAAPQIHLLSGATMLGAFFIL), 301–321 (LIFGALAGLLVWLIRSFGGYP), and 322–342 (DGVAFAVLLANITVPLIDYYT).

It belongs to the NqrB/RnfD family. As to quaternary structure, the complex is composed of six subunits: RsxA, RsxB, RsxC, RsxD, RsxE and RsxG. FMN serves as cofactor.

It is found in the cell inner membrane. Functionally, part of a membrane-bound complex that couples electron transfer with translocation of ions across the membrane. Required to maintain the reduced state of SoxR. Probably transfers electron from NAD(P)H to SoxR. The sequence is that of Ion-translocating oxidoreductase complex subunit D from Escherichia coli (strain K12).